The primary structure comprises 349 residues: Anthranilate phosphoribosyltransferase (349 aa).

Residues G82, 85–86 (GD), 92–95 (NVST), 110–118 (KHGNRGVSS), and S122 each bind 5-phospho-alpha-D-ribose 1-diphosphate. Anthranilate is bound at residue G82. S94 is a Mg(2+) binding site. Residue N113 participates in anthranilate binding. R168 contributes to the anthranilate binding site. Positions 227 and 228 each coordinate Mg(2+).

Belongs to the anthranilate phosphoribosyltransferase family. Homodimer. Mg(2+) serves as cofactor.

It catalyses the reaction N-(5-phospho-beta-D-ribosyl)anthranilate + diphosphate = 5-phospho-alpha-D-ribose 1-diphosphate + anthranilate. It participates in amino-acid biosynthesis; L-tryptophan biosynthesis; L-tryptophan from chorismate: step 2/5. In terms of biological role, catalyzes the transfer of the phosphoribosyl group of 5-phosphorylribose-1-pyrophosphate (PRPP) to anthranilate to yield N-(5'-phosphoribosyl)-anthranilate (PRA). In Acinetobacter baylyi (strain ATCC 33305 / BD413 / ADP1), this protein is Anthranilate phosphoribosyltransferase.